The sequence spans 439 residues: Xylose isomerase (439 aa).

Active-site residues include H101 and D104. Residues E232, E268, H271, D296, D307, D309, and D339 each coordinate Mg(2+).

It belongs to the xylose isomerase family. In terms of assembly, homotetramer. It depends on Mg(2+) as a cofactor.

Its subcellular location is the cytoplasm. The catalysed reaction is alpha-D-xylose = alpha-D-xylulofuranose. This Yersinia pestis bv. Antiqua (strain Angola) protein is Xylose isomerase.